A 752-amino-acid polypeptide reads, in one-letter code: Probable beta-glucosidase D (752 aa).

An N-terminal signal peptide occupies residues 1–18 (MRFVSLAVGAALLGAAGA). 2 N-linked (GlcNAc...) asparagine glycosylation sites follow: N187 and N237. Residue D265 is part of the active site. N-linked (GlcNAc...) asparagine glycans are attached at residues N299, N343, N441, N510, N532, N571, N586, N638, N661, and N743.

This sequence belongs to the glycosyl hydrolase 3 family.

It localises to the secreted. The catalysed reaction is Hydrolysis of terminal, non-reducing beta-D-glucosyl residues with release of beta-D-glucose.. Its pathway is glycan metabolism; cellulose degradation. Its function is as follows. Beta-glucosidases are one of a number of cellulolytic enzymes involved in the degradation of cellulosic biomass. Catalyzes the last step releasing glucose from the inhibitory cellobiose. In Aspergillus oryzae (strain ATCC 42149 / RIB 40) (Yellow koji mold), this protein is Probable beta-glucosidase D (bglD).